A 479-amino-acid polypeptide reads, in one-letter code: Solute carrier family 46 member 2 (479 aa).

The Cytoplasmic segment spans residues 1–23 (MGPGGTCPWSSRLSGFRVRTWIE). Residues 24–44 (PVVASTQVAGSLYDAGLLLVV) form a helical membrane-spanning segment. Topologically, residues 45–80 (KESFKSEAGGSSNYSANQSLVEYQEDQQQKAISNFN) are extracellular. N57 and N61 each carry an N-linked (GlcNAc...) asparagine glycan. A helical membrane pass occupies residues 81-101 (IIYNLVLGLTPLLSAYGLGWL). The Cytoplasmic portion of the chain corresponds to 102–110 (SDRYHRKIS). A helical membrane pass occupies residues 111–131 (ICTAMLGFLLSRIGLLLKVML). Residues 132–140 (DWPVEVMYG) lie on the Extracellular side of the membrane. Residues 141-161 (AAALNGLCGSFSAYWSGVMAL) form a helical membrane-spanning segment. The Cytoplasmic segment spans residues 162–174 (GSLGCSEGRRSVR). A helical transmembrane segment spans residues 175 to 195 (LILIDLVLGLAGFSGSMASGH). The Extracellular segment spans residues 196-207 (LFKQIVGHSAQG). The helical transmembrane segment at 208-228 (LLLTACSVGCAAFALFYSLFV) threads the bilayer. Residues 229–281 (LKVPESKPNKVHPTVDTVSGMMGTYRTLDPDQQDKQNVPRNPRTPGKGKSSQR) are Cytoplasmic-facing. The disordered stretch occupies residues 255–277 (TLDPDQQDKQNVPRNPRTPGKGK). A helical membrane pass occupies residues 282-302 (EVVALLFVGAIIYDLAAVGTV). At 303–321 (DVMALFVLKEPLHWNQVQL) the chain is on the extracellular side. The helical transmembrane segment at 322 to 342 (GYGMASGYIIFITSFLGVLVF) threads the bilayer. Topologically, residues 343–348 (SRCFRD) are cytoplasmic. A helical transmembrane segment spans residues 349–369 (TTMIIIGMLSFGSGALLLAFV). Residues 370–371 (KE) lie on the Extracellular side of the membrane. Residues 372–392 (TYMFYIARAIMLFALIPITTI) traverse the membrane as a helical segment. At 393 to 407 (RSAMSKLIKDSSYGK) the chain is on the cytoplasmic side. A helical membrane pass occupies residues 408–428 (IFVILQLCLTLTGVVTSTIYN). Over 429 to 441 (KIYQLTLDKFIGT) the chain is Extracellular. Residues 442–462 (CFVLSSFLSFLAIVPIGVVAY) form a helical membrane-spanning segment. The Cytoplasmic portion of the chain corresponds to 463–479 (KQVPRSQQGECAEKQRS).

The protein belongs to the major facilitator superfamily. SLC46A family. Post-translationally, glycosylated. Expressed on cortical epithelial cells in the thymus. Mainly expressed in the thymic cortex and is highly enriched in SCID thymus. Also expressed in lymph nodes, heart, fetal liver, brain, spleen, intestine and kidney, but not in adult liver, skin, skeletal muscle and lung. Expressed in skin epidermis.

It is found in the endosome membrane. The protein localises to the cell membrane. It carries out the reaction N-acetyl-beta-D-glucosaminyl-(1-&gt;4)-1,6-anhydro-N-acetyl-beta-D-muramoyl-L-alanyl-gamma-D-glutamyl-meso-2,6-diaminopimeloyl-D-alanine(out) + n H(+)(out) = N-acetyl-beta-D-glucosaminyl-(1-&gt;4)-1,6-anhydro-N-acetyl-beta-D-muramoyl-L-alanyl-gamma-D-glutamyl-meso-2,6-diaminopimeloyl-D-alanine(in) + n H(+)(in). The enzyme catalyses L-alanyl-gamma-D-glutamyl-meso-2,6-diaminopimelate(out) + n H(+)(out) = L-alanyl-gamma-D-glutamyl-meso-2,6-diaminopimelate(in) + n H(+)(in). The catalysed reaction is N-acetyl-D-muramoyl-L-alanyl-D-isoglutamine(out) + n H(+)(out) = N-acetyl-D-muramoyl-L-alanyl-D-isoglutamine(in) + n H(+)(in). It catalyses the reaction 2',3'-cGAMP(out) + n H(+)(out) = 2',3'-cGAMP(in) + n H(+)(in). It carries out the reaction 3',3'-cGAMP(out) + n H(+)(out) = 3',3'-cGAMP(in) + n H(+)(in). Its activity is regulated as follows. Down-regulated by the anti-inflammatory drug methotrexate. Its function is as follows. Proton-coupled transporter that delivers pathogen-associated or danger-associated molecular patterns to cytosolic pattern recognition receptors as part of the innate immune response to microbes or tissue injury. Has selectivity toward muropeptides that contain the amino acid diaminopimelic acid (DAP-type peptidoglycan muropeptides) including Tri-DAP and tracheal toxin (TCT), common in Gram-negative bacteria and Gram-positive bacilli. In the context of immune recognition of skin microbiota, shuttles bacterial muropeptides across the endolysosomal membranes into the cytosol for recognition by NOD1, triggering MYD88-dependent secretion of IL1A and neutrophil recruitment in a pyroptosis-type inflammatory process. To a lesser extent and redundantly, transports muramyl dipeptides derived from most bacterial proteoglycans, eliciting NOD2 receptor activation and downstream inflammatory responses. Postulated to function as an importer of cyclic GMP-AMP dinucleotides (cGAMPs) in monocyte and macrophage cell lineages. Selectively imports cGAMPs derived from pathogenic bacteria such as 3'3'-cGAMP thus providing for differential immune recognition of pathogenic versus commensal bacteria. During tumorigenesis may transport extracellular tumor-derived 2'3'-cGAMP across the plasma membrane of M1-polarized macrophages to activate the anti-tumoral stimulator of interferon genes (STING) pathway. The transport mechanism, its electrogenicity and stoichiometry remain to be elucidated. The polypeptide is Solute carrier family 46 member 2 (Mus musculus (Mouse)).